An 89-amino-acid chain; its full sequence is Small ribosomal subunit protein uS15 (89 aa).

The protein belongs to the universal ribosomal protein uS15 family. Part of the 30S ribosomal subunit. Forms a bridge to the 50S subunit in the 70S ribosome, contacting the 23S rRNA.

Its function is as follows. One of the primary rRNA binding proteins, it binds directly to 16S rRNA where it helps nucleate assembly of the platform of the 30S subunit by binding and bridging several RNA helices of the 16S rRNA. In terms of biological role, forms an intersubunit bridge (bridge B4) with the 23S rRNA of the 50S subunit in the ribosome. In Crocosphaera subtropica (strain ATCC 51142 / BH68) (Cyanothece sp. (strain ATCC 51142)), this protein is Small ribosomal subunit protein uS15.